The sequence spans 313 residues: MTSMLEIYSGCRACSYDYLSVLYEQYFRKNGIEAKYVGTLVRPTDSQKFLIDDILHGSHELMRQRKKVDFFRGDSVLYPWYDFHIDSILIVPSNWNAEQYSKYFRKTYVLPHFVNDDAVEMIVRNEERLKEDKLRNIQYSFLTIGHNNDFDRKGIVLAKRLMDRLGISNKLVCYSNEPFCHKEHRLTEVGKYREYYRAKFYVSLSYSESFGMTPFEAMAVGTPVIYPNCHAYAEYFKGEVGLPINCQGHSIMRIGDKDYNVWYFDIDEAKEIIQYADSMSDEEYIDMSIKTFEFAKQFYARNIIPKLIEIMKS.

It belongs to the glycosyltransferase group 1 family. Glycosyltransferase 4 subfamily.

The polypeptide is Putative glycosyltransferase ORF313 (Acidianus hospitalis (AFV-1)).